Consider the following 353-residue polypeptide: Nicotinate-nucleotide--dimethylbenzimidazole phosphoribosyltransferase (353 aa).

E318 serves as the catalytic Proton acceptor.

The protein belongs to the CobT family.

It catalyses the reaction 5,6-dimethylbenzimidazole + nicotinate beta-D-ribonucleotide = alpha-ribazole 5'-phosphate + nicotinate + H(+). It participates in nucleoside biosynthesis; alpha-ribazole biosynthesis; alpha-ribazole from 5,6-dimethylbenzimidazole: step 1/2. In terms of biological role, catalyzes the synthesis of alpha-ribazole-5'-phosphate from nicotinate mononucleotide (NAMN) and 5,6-dimethylbenzimidazole (DMB). The sequence is that of Nicotinate-nucleotide--dimethylbenzimidazole phosphoribosyltransferase from Geobacter metallireducens (strain ATCC 53774 / DSM 7210 / GS-15).